Here is a 3183-residue protein sequence, read N- to C-terminus: WD repeat- and FYVE domain-containing protein 4 (3183 aa).

Residues 1–15 (MEAEDLSKTEDRPED) show a composition bias toward basic and acidic residues. Disordered regions lie at residues 1–37 (MEAE…EGQS), 790–811 (AGQE…GKFK), 938–977 (KSLH…QALR), and 1828–1852 (KETT…HAAE). The span at 1832-1852 (SESSRNTSSPGASAEASHAAE) shows a compositional bias: low complexity. The BEACH-type PH domain occupies 2383–2508 (LDGEKVSQKV…DRSKALKSFS (126 aa)). The 295-residue stretch at 2525-2819 (NLRKHPGFDR…QIFTKPHPSR (295 aa)) folds into the BEACH domain. The disordered stretch occupies residues 2812 to 2836 (FTKPHPSRNTTGKNPGPGKDASTPV). WD repeat units lie at residues 2930-2969 (LAAW…GRPR), 2979-3018 (GHTQ…RVAC), 3021-3060 (VHRE…ASIT), 3070-3108 (TCCC…MPVP), and 3150-3183 (KASP…SADG).

In terms of assembly, interacts with HSP90AB1. In terms of tissue distribution, highly expressed in immune tissues, especially B lymphocytes.

Its subcellular location is the early endosome. The protein localises to the endoplasmic reticulum. In terms of biological role, plays a critical role in the regulation of cDC1-mediated cross-presentation of viral and tumor antigens in dendritic cells. Mechanistically, acts near the plasma membrane and interacts with endosomal membranes to promote endosomal-to-cytosol antigen trafficking. Also plays a role in B-cell survival through regulation of autophagy. The sequence is that of WD repeat- and FYVE domain-containing protein 4 from Mus musculus (Mouse).